The following is a 198-amino-acid chain: Glycerol-3-phosphate acyltransferase (198 aa).

The next 5 membrane-spanning stretches (helical) occupy residues 2–22, 48–70, 75–97, 111–131, and 154–174; these read YAVL…AYIL, LGYK…AVLI, MGNT…PVFL, VVMT…VTVI, and IFWN…LAIF.

The protein belongs to the PlsY family. As to quaternary structure, probably interacts with PlsX.

It localises to the cell membrane. It carries out the reaction an acyl phosphate + sn-glycerol 3-phosphate = a 1-acyl-sn-glycero-3-phosphate + phosphate. It participates in lipid metabolism; phospholipid metabolism. Functionally, catalyzes the transfer of an acyl group from acyl-phosphate (acyl-PO(4)) to glycerol-3-phosphate (G3P) to form lysophosphatidic acid (LPA). This enzyme utilizes acyl-phosphate as fatty acyl donor, but not acyl-CoA or acyl-ACP. This chain is Glycerol-3-phosphate acyltransferase, found in Thermoanaerobacter pseudethanolicus (strain ATCC 33223 / 39E) (Clostridium thermohydrosulfuricum).